We begin with the raw amino-acid sequence, 97 residues long: Defensin-A2 (97 aa).

The N-terminal stretch at 1–19 is a signal peptide; sequence MRTLSLLLALLFLAAQTLA. A propeptide spanning residues 20–61 is cleaved from the precursor; that stretch reads QPIDEGAEEVITEEPEITETQDPTTIMLIERGIGGDSTDATR. Intrachain disulfides connect Cys66/Cys93, Cys68/Cys82, and Cys72/Cys92. A propeptide spanning residues 96-97 is cleaved from the precursor; that stretch reads TS.

It belongs to the alpha-defensin family. Highly expressed in intestine, expressed at lower levels in spleen, and at very low levels in kidney and lung.

Its subcellular location is the secreted. Its function is as follows. Has antimicrobial activity. This chain is Defensin-A2, found in Ornithorhynchus anatinus (Duckbill platypus).